We begin with the raw amino-acid sequence, 387 residues long: 3-ketoacyl-CoA thiolase FadA (387 aa).

Cysteine 91 serves as the catalytic Acyl-thioester intermediate. Residues histidine 343 and cysteine 373 each act as proton acceptor in the active site.

This sequence belongs to the thiolase-like superfamily. Thiolase family. As to quaternary structure, heterotetramer of two alpha chains (FadB) and two beta chains (FadA).

It is found in the cytoplasm. The catalysed reaction is an acyl-CoA + acetyl-CoA = a 3-oxoacyl-CoA + CoA. Its pathway is lipid metabolism; fatty acid beta-oxidation. Functionally, catalyzes the final step of fatty acid oxidation in which acetyl-CoA is released and the CoA ester of a fatty acid two carbons shorter is formed. Involved in the aerobic and anaerobic degradation of long-chain fatty acids. The sequence is that of 3-ketoacyl-CoA thiolase FadA (fadA) from Escherichia coli (strain K12).